We begin with the raw amino-acid sequence, 245 residues long: 5-oxoprolinase subunit A (245 aa).

Belongs to the LamB/PxpA family. In terms of assembly, forms a complex composed of PxpA, PxpB and PxpC.

The enzyme catalyses 5-oxo-L-proline + ATP + 2 H2O = L-glutamate + ADP + phosphate + H(+). In terms of biological role, catalyzes the cleavage of 5-oxoproline to form L-glutamate coupled to the hydrolysis of ATP to ADP and inorganic phosphate. In Chromobacterium violaceum (strain ATCC 12472 / DSM 30191 / JCM 1249 / CCUG 213 / NBRC 12614 / NCIMB 9131 / NCTC 9757 / MK), this protein is 5-oxoprolinase subunit A.